We begin with the raw amino-acid sequence, 1080 residues long: Histone deacetylase 4 (1080 aa).

3 disordered regions span residues 1 to 25, 132 to 165, and 205 to 312; these read MSSQ…PPRV, KLEQ…ESAV, and TQHS…ISAE. Residues 132 to 162 are compositionally biased toward basic and acidic residues; that stretch reads KLEQHRQEQELEKQHREQKLQQLKNKEKGKE. Residues 205–224 show a composition bias toward polar residues; the sequence is TQHSSLDQSSPPQSGVSGTY. 2 stretches are compositionally biased toward basic and acidic residues: residues 233 to 244 and 258 to 273; these read DSKDDFPLRKTA and KVAE…RKDG. Positions 289-312 are enriched in low complexity; the sequence is SACNSAPGSGPSSPNNSSNNISAE. The PxLPxI/L motif lies at 348 to 353; that stretch reads PSLPNI. 3 disordered regions span residues 506–527, 558–579, and 622–646; these read KPNE…ELRE, EPIE…GQRQ, and PLSR…PTKP. Over residues 509–527 the composition is skewed to basic and acidic residues; the sequence is EPARQHESHPEETEEELRE. Residues 560 to 571 are compositionally biased toward acidic residues; that stretch reads IESDEEEAEPQQ. The span at 625–637 shows a compositional bias: polar residues; that stretch reads RAQSSPASATFPM. A histone deacetylase region spans residues 651–1080; that stretch reads GLVYDTLMLK…DEPMEEEPPL (430 aa). Residues Cys663, Cys665, His671, and Cys747 each coordinate Zn(2+). His799 is a catalytic residue. The tract at residues 1055–1080 is disordered; it reads MASLSVGVKPAEKRPDDEPMEEEPPL.

Belongs to the histone deacetylase family. HD type 2 subfamily.

It is found in the nucleus. The catalysed reaction is N(6)-acetyl-L-lysyl-[histone] + H2O = L-lysyl-[histone] + acetate. Functionally, responsible for the deacetylation of lysine residues on the N-terminal part of the core histones (H2A, H2B, H3 and H4). Histone deacetylation gives a tag for epigenetic repression and plays an important role in transcriptional regulation, cell cycle progression and developmental events. Histone deacetylases act via the formation of large multiprotein complexes. In Gallus gallus (Chicken), this protein is Histone deacetylase 4 (HDAC4).